A 483-amino-acid polypeptide reads, in one-letter code: Phloretin 2'-O-glucosyltransferase (483 aa).

Histidine 15 acts as the Proton acceptor in catalysis. Histidine 15 lines the an anthocyanidin pocket. Aspartate 118 serves as the catalytic Charge relay. Threonine 140, alanine 360, glutamine 362, histidine 377, tryptophan 380, asparagine 381, serine 382, and glutamate 385 together coordinate UDP-alpha-D-glucose. Alanine 400 is a binding site for an anthocyanidin. Glutamate 401 and glutamine 402 together coordinate UDP-alpha-D-glucose.

It belongs to the UDP-glycosyltransferase family. As to expression, highly expressed in roots and at lower levels in leaves, flowers and fruits.

The enzyme catalyses phloretin + UDP-alpha-D-glucose = phlorizin + UDP + H(+). In terms of biological role, glycosyltransferase that possesses phloretin 2'-O-glycosyltransferase activity. Converts phloretin to phlorizin (phloretin 2'-O-glucoside), a potent antioxidant. Is specific for phloretin and does not possess glycosyltransferase activity toward caffeic acid, catechin, chlorogenic acid, 2-coumaric acid, 3-coumaric acid, 4-coumaric acid, cyanidin, 3,4-dihydroxyhydrocinnamic acid, epicatechin, 3-hydroxybenzoic acid, naringenin, 3,4-dihydroxybenzoic acid, quercetin and rutin. Can glycosylate phloretin in the presence of UDP-glucose, UDP-xylose and UDP-galactose. This chain is Phloretin 2'-O-glucosyltransferase, found in Malus domestica (Apple).